A 310-amino-acid chain; its full sequence is Upstream stimulatory factor 1 (310 aa).

Residues 1–17 are compositionally biased toward polar residues; sequence MKGQQKTAETEEGTVQI. 2 disordered regions span residues 1–26 and 171–209; these read MKGQ…ATGE and QGGS…EVER. Residues 190 to 209 show a composition bias toward basic and acidic residues; sequence EAPRTTRDEKRRAQHNEVER. In terms of domain architecture, bHLH spans 199–254; that stretch reads KRRAQHNEVERRRRDKINNWIVQLSKIIPDCSMESTKSGQSKGGILSKACDYIQEL. Residues 271-292 form a leucine-zipper region; it reads LQLDNDVLRQQVEDLKNKNLLL. Residue Lys-306 forms a Glycyl lysine isopeptide (Lys-Gly) (interchain with G-Cter in SUMO2) linkage.

As to quaternary structure, efficient DNA binding requires dimerization with another bHLH protein. Binds DNA as a homodimer or a heterodimer (USF1/USF2).

The protein resides in the nucleus. Functionally, transcription factor that binds to a symmetrical DNA sequence (E-boxes) (5'-CACGTG-3') that is found in a variety of viral and cellular promoters. This Bos taurus (Bovine) protein is Upstream stimulatory factor 1 (USF1).